A 694-amino-acid polypeptide reads, in one-letter code: Threonine--tRNA ligase (694 aa).

The TGS domain maps to 8 to 74 (NFVNTSVTTH…EETATFTAVP (67 aa)). Positions 273–579 (DHRRLGTELD…LLEHYAGAFP (307 aa)) are catalytic. Zn(2+) is bound by residues cysteine 378, histidine 429, and histidine 556.

It belongs to the class-II aminoacyl-tRNA synthetase family. As to quaternary structure, homodimer. Zn(2+) serves as cofactor.

The protein localises to the cytoplasm. The enzyme catalyses tRNA(Thr) + L-threonine + ATP = L-threonyl-tRNA(Thr) + AMP + diphosphate + H(+). Catalyzes the attachment of threonine to tRNA(Thr) in a two-step reaction: L-threonine is first activated by ATP to form Thr-AMP and then transferred to the acceptor end of tRNA(Thr). Also edits incorrectly charged L-seryl-tRNA(Thr). The polypeptide is Threonine--tRNA ligase (Corynebacterium efficiens (strain DSM 44549 / YS-314 / AJ 12310 / JCM 11189 / NBRC 100395)).